The sequence spans 357 residues: Cinnamyl alcohol dehydrogenase 1 (357 aa).

Cys47 contacts Zn(2+). NADP(+) is bound at residue Thr49. 7 residues coordinate Zn(2+): His69, Glu70, Cys100, Cys103, Cys106, Cys114, and Cys163. NADP(+) contacts are provided by residues Thr167, 188–193 (GLGGVG), 211–216 (SSSDKK), Thr251, Gly275, and 298–300 (SFI).

This sequence belongs to the zinc-containing alcohol dehydrogenase family. Homodimer. It depends on Zn(2+) as a cofactor. As to expression, expressed in leaves, mainly in peltate glands.

It catalyses the reaction (E)-cinnamyl alcohol + NADP(+) = (E)-cinnamaldehyde + NADPH + H(+). The enzyme catalyses (E)-coniferol + NADP(+) = (E)-coniferaldehyde + NADPH + H(+). It carries out the reaction (E)-sinapyl alcohol + NADP(+) = (E)-sinapaldehyde + NADPH + H(+). The catalysed reaction is (E)-4-coumaroyl alcohol + NADP(+) = (E)-4-coumaraldehyde + NADPH + H(+). It catalyses the reaction (E)-caffeyl alcohol + NADP(+) = (E)-caffeyl aldehyde + NADPH + H(+). It participates in aromatic compound metabolism; phenylpropanoid biosynthesis. With respect to regulation, 60% inhibition by 5 mM Ca(+), Mg(+) or Cu(+). Functionally, involved in the production of citral, a mixture of geranial and neral with a strong lemony scent. Reversibly oxidizes geraniol to produce geranial at half the efficiency compared with its activity with cinnamyl alcohol. Does not use nerol and neral as substrates. This chain is Cinnamyl alcohol dehydrogenase 1 (CAD1), found in Ocimum basilicum (Sweet basil).